The sequence spans 368 residues: Quinolinate synthase (368 aa).

2 residues coordinate iminosuccinate: histidine 46 and serine 63. Cysteine 110 is a binding site for [4Fe-4S] cluster. Iminosuccinate-binding positions include 141-143 and serine 162; that span reads YVN. Position 230 (cysteine 230) interacts with [4Fe-4S] cluster. Iminosuccinate contacts are provided by residues 256–258 and threonine 273; that span reads HPE. Residue cysteine 320 participates in [4Fe-4S] cluster binding.

It belongs to the quinolinate synthase family. Type 3 subfamily. [4Fe-4S] cluster is required as a cofactor.

The protein resides in the cytoplasm. It carries out the reaction iminosuccinate + dihydroxyacetone phosphate = quinolinate + phosphate + 2 H2O + H(+). It functions in the pathway cofactor biosynthesis; NAD(+) biosynthesis; quinolinate from iminoaspartate: step 1/1. Its function is as follows. Catalyzes the condensation of iminoaspartate with dihydroxyacetone phosphate to form quinolinate. This is Quinolinate synthase from Bacillus cereus (strain Q1).